A 431-amino-acid polypeptide reads, in one-letter code: UDP-N-acetylglucosamine 1-carboxyvinyltransferase (431 aa).

A phosphoenolpyruvate-binding site is contributed by 25–26; sequence KN. Residue arginine 101 coordinates UDP-N-acetyl-alpha-D-glucosamine. The active-site Proton donor is the cysteine 125. A 2-(S-cysteinyl)pyruvic acid O-phosphothioketal modification is found at cysteine 125. UDP-N-acetyl-alpha-D-glucosamine contacts are provided by aspartate 317 and isoleucine 339.

It belongs to the EPSP synthase family. MurA subfamily.

The protein localises to the cytoplasm. It carries out the reaction phosphoenolpyruvate + UDP-N-acetyl-alpha-D-glucosamine = UDP-N-acetyl-3-O-(1-carboxyvinyl)-alpha-D-glucosamine + phosphate. Its pathway is cell wall biogenesis; peptidoglycan biosynthesis. Functionally, cell wall formation. Adds enolpyruvyl to UDP-N-acetylglucosamine. The sequence is that of UDP-N-acetylglucosamine 1-carboxyvinyltransferase from Thermobifida fusca (strain YX).